We begin with the raw amino-acid sequence, 515 residues long: DNA-directed RNA polymerase subunit Rpo2N (515 aa).

It belongs to the RNA polymerase beta chain family. In terms of assembly, part of the RNA polymerase complex.

The protein localises to the cytoplasm. The catalysed reaction is RNA(n) + a ribonucleoside 5'-triphosphate = RNA(n+1) + diphosphate. Its function is as follows. DNA-dependent RNA polymerase (RNAP) catalyzes the transcription of DNA into RNA using the four ribonucleoside triphosphates as substrates. The Rpo2 subunit (Rpo2N and Rpo2C in this organism) is implicated in DNA promoter recognition and in nucleotide binding. This is DNA-directed RNA polymerase subunit Rpo2N from Methanothermobacter thermautotrophicus (strain Winter) (Methanobacterium thermoautotrophicum).